We begin with the raw amino-acid sequence, 177 residues long: Glutathione peroxidase homolog (177 aa).

The active site involves cysteine 35.

The protein belongs to the glutathione peroxidase family.

Functionally, important in the cellular metabolism or defense processes particular to this pathogen. The polypeptide is Glutathione peroxidase homolog (gpxA) (Neisseria meningitidis serogroup A / serotype 4A (strain DSM 15465 / Z2491)).